The primary structure comprises 475 residues: Glutamate--tRNA ligase (475 aa).

A 'HIGH' region motif is present at residues 9–19 (PSPTGYLHVGG). The 'KMSKS' region motif lies at 240–244 (KLSKR). Lys243 lines the ATP pocket.

This sequence belongs to the class-I aminoacyl-tRNA synthetase family. Glutamate--tRNA ligase type 1 subfamily. Monomer.

The protein localises to the cytoplasm. It catalyses the reaction tRNA(Glu) + L-glutamate + ATP = L-glutamyl-tRNA(Glu) + AMP + diphosphate. Its function is as follows. Catalyzes the attachment of glutamate to tRNA(Glu) in a two-step reaction: glutamate is first activated by ATP to form Glu-AMP and then transferred to the acceptor end of tRNA(Glu). This Vibrio campbellii (strain ATCC BAA-1116) protein is Glutamate--tRNA ligase.